The chain runs to 158 residues: uncharacterized protein (158 aa).

The protein resides in the mitochondrion. This is an uncharacterized protein from Arabidopsis thaliana (Mouse-ear cress).